Consider the following 432-residue polypeptide: Adenosylmethionine-8-amino-7-oxononanoate aminotransferase (432 aa).

W52 provides a ligand contact to substrate. 112–113 (GS) is a binding site for pyridoxal 5'-phosphate. Residue Y144 participates in substrate binding. Residue D245 participates in pyridoxal 5'-phosphate binding. Substrate contacts are provided by K274 and G307. K274 is modified (N6-(pyridoxal phosphate)lysine). 308–309 (PT) lines the pyridoxal 5'-phosphate pocket. Position 391 (R391) interacts with substrate.

It belongs to the class-III pyridoxal-phosphate-dependent aminotransferase family. BioA subfamily. As to quaternary structure, homodimer. The cofactor is pyridoxal 5'-phosphate.

It localises to the cytoplasm. It catalyses the reaction (8S)-8-amino-7-oxononanoate + S-adenosyl-L-methionine = S-adenosyl-4-methylsulfanyl-2-oxobutanoate + (7R,8S)-7,8-diammoniononanoate. It participates in cofactor biosynthesis; biotin biosynthesis; 7,8-diaminononanoate from 8-amino-7-oxononanoate (SAM route): step 1/1. In terms of biological role, catalyzes the transfer of the alpha-amino group from S-adenosyl-L-methionine (SAM) to 7-keto-8-aminopelargonic acid (KAPA) to form 7,8-diaminopelargonic acid (DAPA). It is the only aminotransferase known to utilize SAM as an amino donor. This Buchnera aphidicola subsp. Schizaphis graminum (strain Sg) protein is Adenosylmethionine-8-amino-7-oxononanoate aminotransferase.